The following is a 318-amino-acid chain: Ribonuclease Z (318 aa).

Zn(2+) contacts are provided by His63, His65, Asp67, His68, His142, Asp210, and His268. Catalysis depends on Asp67, which acts as the Proton acceptor.

The protein belongs to the RNase Z family. In terms of assembly, homodimer. Zn(2+) is required as a cofactor.

It catalyses the reaction Endonucleolytic cleavage of RNA, removing extra 3' nucleotides from tRNA precursor, generating 3' termini of tRNAs. A 3'-hydroxy group is left at the tRNA terminus and a 5'-phosphoryl group is left at the trailer molecule.. Functionally, zinc phosphodiesterase, which displays some tRNA 3'-processing endonuclease activity. Probably involved in tRNA maturation, by removing a 3'-trailer from precursor tRNA. This chain is Ribonuclease Z, found in Thermobifida fusca (strain YX).